Consider the following 874-residue polypeptide: Alanine--tRNA ligase (874 aa).

Residues His-562, His-566, Cys-664, and His-668 each coordinate Zn(2+).

The protein belongs to the class-II aminoacyl-tRNA synthetase family. It depends on Zn(2+) as a cofactor.

It is found in the cytoplasm. The catalysed reaction is tRNA(Ala) + L-alanine + ATP = L-alanyl-tRNA(Ala) + AMP + diphosphate. Functionally, catalyzes the attachment of alanine to tRNA(Ala) in a two-step reaction: alanine is first activated by ATP to form Ala-AMP and then transferred to the acceptor end of tRNA(Ala). Also edits incorrectly charged Ser-tRNA(Ala) and Gly-tRNA(Ala) via its editing domain. The sequence is that of Alanine--tRNA ligase from Shewanella oneidensis (strain ATCC 700550 / JCM 31522 / CIP 106686 / LMG 19005 / NCIMB 14063 / MR-1).